Here is a 461-residue protein sequence, read N- to C-terminus: MSSLFRKKPLETLSAQSKSKSLARTLSAFDLTLLGIGCVIGTGIFVITGTVAATGAGPALIISFILAGLACALAAFCYAEFSSSIPISGSVYSYSYVTLGELLAFLIGWDLMLEYVIALSAVATGWSSYFQSLLAGFNLHIPAALTGAPGSMAGAVFNLPAAVIILLITAIVSRGVKESTRFNNVIVLMKIAIILLFIIVGIGYVKPDNWSPFMPFGMKGVILSAATVFFAYLGFDAVSNASEEVKNPQKNMPVGIISALAVCTVLYIAVSLVLTGMMPYAKLNVGDPVSFALKFVGQDAVAGIISVGAIIGITTVMLALLYAQVRLTFAMSRDGLLPGLFAKVHPSFKTPFRNTWLTGIVAAGIAGFINLGTLAHLVNMGTLAAFTVISIAVIVLRKKHPEIKASFRVPFVPVVPIISAGICLWFMYSLPGVTWLSFVIWIAVGTLVYFLYSRKHSLLNK.

A run of 12 helical transmembrane segments spans residues 33-53 (LLGI…TVAA), 56-76 (AGPA…LAAF), 102-122 (LLAF…LSAV), 152-172 (MAGA…TAIV), 185-205 (VIVL…IGYV), 213-233 (FMPF…FAYL), 254-274 (VGII…SLVL), 301-321 (VAGI…LALL), 355-375 (TWLT…GTLA), 376-396 (HLVN…VIVL), 409-429 (VPFV…FMYS), and 432-452 (GVTW…YFLY).

It belongs to the amino acid-polyamine-organocation (APC) superfamily.

It is found in the cell membrane. In terms of biological role, involved in import of methylthioribose (MTR) into the cell. The sequence is that of Methylthioribose transporter from Bacillus subtilis (strain 168).